The chain runs to 139 residues: Large ribosomal subunit protein uL16 (139 aa).

Belongs to the universal ribosomal protein uL16 family. As to quaternary structure, part of the 50S ribosomal subunit.

Functionally, binds 23S rRNA and is also seen to make contacts with the A and possibly P site tRNAs. The polypeptide is Large ribosomal subunit protein uL16 (Treponema pallidum (strain Nichols)).